Reading from the N-terminus, the 104-residue chain is N(2)-fixation sustaining protein CowN (104 aa).

The protein belongs to the CowN family.

Is required to sustain N(2)-dependent growth in the presence of low levels of carbon monoxide (CO). Probably acts by protecting the N(2) fixation ability of the nitrogenase complex, which is inactivated in the presence of CO. The chain is N(2)-fixation sustaining protein CowN from Arcobacter nitrofigilis (strain ATCC 33309 / DSM 7299 / CCUG 15893 / LMG 7604 / NCTC 12251 / CI) (Campylobacter nitrofigilis).